The following is a 174-amino-acid chain: Large ribosomal subunit protein uL10 (174 aa).

The protein belongs to the universal ribosomal protein uL10 family. As to quaternary structure, part of the ribosomal stalk of the 50S ribosomal subunit. The N-terminus interacts with L11 and the large rRNA to form the base of the stalk. The C-terminus forms an elongated spine to which L12 dimers bind in a sequential fashion forming a multimeric L10(L12)X complex.

Its function is as follows. Forms part of the ribosomal stalk, playing a central role in the interaction of the ribosome with GTP-bound translation factors. This is Large ribosomal subunit protein uL10 from Acidiphilium cryptum (strain JF-5).